A 315-amino-acid polypeptide reads, in one-letter code: Ribose-phosphate pyrophosphokinase (315 aa).

ATP contacts are provided by residues 37–39 and 96–97; these read DGE and RQ. 2 residues coordinate Mg(2+): H131 and D170. The active site involves K194. D-ribose 5-phosphate is bound by residues R196, D220, and 224 to 228; that span reads DTGGT.

This sequence belongs to the ribose-phosphate pyrophosphokinase family. Class I subfamily. Homohexamer. The cofactor is Mg(2+).

The protein resides in the cytoplasm. The catalysed reaction is D-ribose 5-phosphate + ATP = 5-phospho-alpha-D-ribose 1-diphosphate + AMP + H(+). Its pathway is metabolic intermediate biosynthesis; 5-phospho-alpha-D-ribose 1-diphosphate biosynthesis; 5-phospho-alpha-D-ribose 1-diphosphate from D-ribose 5-phosphate (route I): step 1/1. Its function is as follows. Involved in the biosynthesis of the central metabolite phospho-alpha-D-ribosyl-1-pyrophosphate (PRPP) via the transfer of pyrophosphoryl group from ATP to 1-hydroxyl of ribose-5-phosphate (Rib-5-P). The polypeptide is Ribose-phosphate pyrophosphokinase (Buchnera aphidicola subsp. Acyrthosiphon pisum (strain APS) (Acyrthosiphon pisum symbiotic bacterium)).